Consider the following 171-residue polypeptide: MKKPTSAPRSKAFGKQRRKTREELNQEARDRKRLKKHRGHAPGSRAAGGNSASGGGNQNQQKDPRIGSKTPVPLGVTEKVTQQHKPKSEKPMLSPQAELDLLETDERLDALLERLEAGETLSAEDQAWVDAKLDRIDELMQKLGLSYDDDDEDDEEDEKQEDMMRLLRGGN.

Disordered regions lie at residues 1–99 and 145–171; these read MKKP…QAEL and LSYD…RGGN. Residues 20-30 are compositionally biased toward basic and acidic residues; that stretch reads TREELNQEARD. Residues 31-40 are compositionally biased toward basic residues; sequence RKRLKKHRGH. Acidic residues predominate over residues 147–160; sequence YDDDDEDDEEDEKQ.

This sequence belongs to the YihI family. As to quaternary structure, interacts with Der.

Functionally, a GTPase-activating protein (GAP) that modifies Der/EngA GTPase function. May play a role in ribosome biogenesis. This Salmonella choleraesuis (strain SC-B67) protein is Der GTPase-activating protein YihI.